Consider the following 79-residue polypeptide: U-myrmeciitoxin(01)-Mg9a (79 aa).

An N-terminal signal peptide occupies residues 1-21; it reads MKLSCLLLTLAIIFVLTIVHA. Positions 22-48 are excised as a propeptide; it reads PNVEAKALANPESDAIGFADAVGEADP. Q78 carries the post-translational modification Glutamine amide.

In terms of tissue distribution, expressed by the venom gland.

Its subcellular location is the secreted. In terms of biological role, may have antimicrobial properties, like most ant linear peptides. The protein is U-myrmeciitoxin(01)-Mg9a of Myrmecia gulosa (Red bulldog ant).